The sequence spans 395 residues: 1-deoxy-D-xylulose 5-phosphate reductoisomerase (395 aa).

NADPH contacts are provided by threonine 10, glycine 11, serine 12, isoleucine 13, asparagine 38, and asparagine 123. A 1-deoxy-D-xylulose 5-phosphate-binding site is contributed by lysine 124. Glutamate 125 serves as a coordination point for NADPH. Residue aspartate 149 participates in Mn(2+) binding. Residues serine 150, glutamate 151, serine 185, and histidine 208 each contribute to the 1-deoxy-D-xylulose 5-phosphate site. Glutamate 151 provides a ligand contact to Mn(2+). Glycine 214 is a binding site for NADPH. 1-deoxy-D-xylulose 5-phosphate-binding residues include serine 221, asparagine 226, lysine 227, and glutamate 230. Position 230 (glutamate 230) interacts with Mn(2+).

This sequence belongs to the DXR family. Mg(2+) serves as cofactor. Requires Mn(2+) as cofactor.

The enzyme catalyses 2-C-methyl-D-erythritol 4-phosphate + NADP(+) = 1-deoxy-D-xylulose 5-phosphate + NADPH + H(+). The protein operates within isoprenoid biosynthesis; isopentenyl diphosphate biosynthesis via DXP pathway; isopentenyl diphosphate from 1-deoxy-D-xylulose 5-phosphate: step 1/6. Its function is as follows. Catalyzes the NADPH-dependent rearrangement and reduction of 1-deoxy-D-xylulose-5-phosphate (DXP) to 2-C-methyl-D-erythritol 4-phosphate (MEP). In Shewanella woodyi (strain ATCC 51908 / MS32), this protein is 1-deoxy-D-xylulose 5-phosphate reductoisomerase.